We begin with the raw amino-acid sequence, 373 residues long: Chorismate synthase (373 aa).

R48 and R54 together coordinate NADP(+). FMN-binding positions include 125–127 (RSS), 248–249 (NA), G288, 303–307 (KPTSS), and R329.

This sequence belongs to the chorismate synthase family. Homotetramer. FMNH2 is required as a cofactor.

It catalyses the reaction 5-O-(1-carboxyvinyl)-3-phosphoshikimate = chorismate + phosphate. It participates in metabolic intermediate biosynthesis; chorismate biosynthesis; chorismate from D-erythrose 4-phosphate and phosphoenolpyruvate: step 7/7. In terms of biological role, catalyzes the anti-1,4-elimination of the C-3 phosphate and the C-6 proR hydrogen from 5-enolpyruvylshikimate-3-phosphate (EPSP) to yield chorismate, which is the branch point compound that serves as the starting substrate for the three terminal pathways of aromatic amino acid biosynthesis. This reaction introduces a second double bond into the aromatic ring system. This chain is Chorismate synthase, found in Colwellia psychrerythraea (strain 34H / ATCC BAA-681) (Vibrio psychroerythus).